The chain runs to 770 residues: 1,4-alpha-glucan branching enzyme GlgB (770 aa).

The Nucleophile role is filled by D437. E488 (proton donor) is an active-site residue.

Belongs to the glycosyl hydrolase 13 family. GlgB subfamily. In terms of assembly, monomer.

The catalysed reaction is Transfers a segment of a (1-&gt;4)-alpha-D-glucan chain to a primary hydroxy group in a similar glucan chain.. It functions in the pathway glycan biosynthesis; glycogen biosynthesis. Its function is as follows. Catalyzes the formation of the alpha-1,6-glucosidic linkages in glycogen by scission of a 1,4-alpha-linked oligosaccharide from growing alpha-1,4-glucan chains and the subsequent attachment of the oligosaccharide to the alpha-1,6 position. The sequence is that of 1,4-alpha-glucan branching enzyme GlgB from Synechococcus sp. (strain JA-3-3Ab) (Cyanobacteria bacterium Yellowstone A-Prime).